We begin with the raw amino-acid sequence, 234 residues long: Probable pectate lyase F (234 aa).

An N-terminal signal peptide occupies residues 1–17 (MWSSIAAFPVLVPVALA).

The protein belongs to the polysaccharide lyase 3 family. Ca(2+) serves as cofactor.

Its subcellular location is the secreted. The catalysed reaction is Eliminative cleavage of (1-&gt;4)-alpha-D-galacturonan to give oligosaccharides with 4-deoxy-alpha-D-galact-4-enuronosyl groups at their non-reducing ends.. Functionally, pectinolytic enzyme consist of four classes of enzymes: pectin lyase, polygalacturonase, pectin methylesterase and rhamnogalacturonase. Among pectinolytic enzymes, pectin lyase is the most important in depolymerization of pectin, since it cleaves internal glycosidic bonds of highly methylated pectins. Favors pectate, the anion, over pectin, the methyl ester. The protein is Probable pectate lyase F (plyF) of Aspergillus fumigatus (strain ATCC MYA-4609 / CBS 101355 / FGSC A1100 / Af293) (Neosartorya fumigata).